The primary structure comprises 380 residues: Cytochrome b (380 aa).

4 helical membrane-spanning segments follow: residues 34-54, 78-99, 114-134, and 179-199; these read FGSLLAVCLITQILTGLLLAM, WLIRNLHANGASFFFICIFLHI, WNTGVILLLTLMATAFVGYVL, and FFALHFLLPFVIAGITIIHLT. Positions 84 and 98 each coordinate heme b. Residues H183 and H197 each coordinate heme b. H202 is an a ubiquinone binding site. 4 helical membrane-spanning segments follow: residues 227–247, 289–309, 321–341, and 348–368; these read IKDILGLTLMFTPFLMLALFS, LGGVLALAASVLILLLIPFLH, LSQTLFWLLVANLLILTWIGS, and FIIIGQMASLSYFSILLILFP.

Belongs to the cytochrome b family. The cytochrome bc1 complex contains 11 subunits: 3 respiratory subunits (MT-CYB, CYC1 and UQCRFS1), 2 core proteins (UQCRC1 and UQCRC2) and 6 low-molecular weight proteins (UQCRH/QCR6, UQCRB/QCR7, UQCRQ/QCR8, UQCR10/QCR9, UQCR11/QCR10 and a cleavage product of UQCRFS1). This cytochrome bc1 complex then forms a dimer. It depends on heme b as a cofactor.

Its subcellular location is the mitochondrion inner membrane. In terms of biological role, component of the ubiquinol-cytochrome c reductase complex (complex III or cytochrome b-c1 complex) that is part of the mitochondrial respiratory chain. The b-c1 complex mediates electron transfer from ubiquinol to cytochrome c. Contributes to the generation of a proton gradient across the mitochondrial membrane that is then used for ATP synthesis. The sequence is that of Cytochrome b (MT-CYB) from Alectoris rufa (Red-legged partridge).